We begin with the raw amino-acid sequence, 1150 residues long: ATP-dependent helicase/deoxyribonuclease subunit B (1150 aa).

8 to 15 (GRAGSGKS) contacts ATP. The [4Fe-4S] cluster site is built by Cys786, Cys1106, Cys1109, and Cys1115.

The protein belongs to the helicase family. AddB/RexB type 1 subfamily. As to quaternary structure, heterodimer of AddA and AddB. Mg(2+) is required as a cofactor. The cofactor is [4Fe-4S] cluster.

The heterodimer acts as both an ATP-dependent DNA helicase and an ATP-dependent, dual-direction single-stranded exonuclease. Recognizes the chi site generating a DNA molecule suitable for the initiation of homologous recombination. The AddB subunit has 5' -&gt; 3' nuclease activity but not helicase activity. In Clostridium botulinum (strain Hall / ATCC 3502 / NCTC 13319 / Type A), this protein is ATP-dependent helicase/deoxyribonuclease subunit B.